The following is a 759-amino-acid chain: Nucleolar RNA helicase 2-A (759 aa).

The interval 1–154 (MPVKVYAEEM…KKRKTDTTEI (154 aa)) is disordered. Residues 77-86 (ETAEECDGEQ) show a composition bias toward acidic residues. A Q motif motif is present at residues 179–207 (GDFSKFPLSKETIKNLQAKGVSYLFPIQS). One can recognise a Helicase ATP-binding domain in the interval 210–389 (FHTAYSGKDV…KKYMRKQFEK (180 aa)). Residue 223-230 (ARTGTGKT) coordinates ATP. The short motif at 332-335 (DEVD) is the DEAD box element. In terms of domain architecture, Helicase C-terminal spans 422–566 (DLVQVYSGSH…VGVPSLLNVA (145 aa)). Residues 709 to 759 (QESERNFDGPRNRGFGGRGRRPFDRRNNSRNSNRGGGGRGRNRNGGFRRGR) form a disordered region. Basic and acidic residues predominate over residues 710 to 719 (ESERNFDGPR). Over residues 748 to 759 (GRNRNGGFRRGR) the composition is skewed to basic residues.

The protein belongs to the DEAD box helicase family. DDX21/DDX50 subfamily. In terms of tissue distribution, widely expressed. Expressed at higher level in stomach. Expressed at higher level compared to ddx21-b.

The protein resides in the nucleus. It is found in the nucleolus. It localises to the nucleoplasm. The protein localises to the cytoplasm. Its subcellular location is the cytosol. The protein resides in the mitochondrion. It carries out the reaction ATP + H2O = ADP + phosphate + H(+). RNA helicase that acts as a sensor of the transcriptional status of both RNA polymerase (Pol) I and II: promotes ribosomal RNA (rRNA) processing and transcription from polymerase II (Pol II). Binds various RNAs, such as rRNAs, snoRNAs, 7SK and, at lower extent, mRNAs. In the nucleolus, localizes to rDNA locus, where it directly binds rRNAs and snoRNAs, and promotes rRNA transcription, processing and modification. Required for rRNA 2'-O-methylation, possibly by promoting the recruitment of late-acting snoRNAs SNORD56 and SNORD58 with pre-ribosomal complexes. In the nucleoplasm, binds 7SK RNA and is recruited to the promoters of Pol II-transcribed genes: acts by facilitating the release of P-TEFb from inhibitory 7SK snRNP in a manner that is dependent on its helicase activity, thereby promoting transcription of its target genes. Required to prevent R-loop-associated DNA damage and transcription-associated genomic instability. This Xenopus laevis (African clawed frog) protein is Nucleolar RNA helicase 2-A (ddx21-a).